We begin with the raw amino-acid sequence, 369 residues long: S-(hydroxymethyl)glutathione dehydrogenase (369 aa).

Positions 40, 62, 92, 95, 98, 106, and 169 each coordinate Zn(2+).

Belongs to the zinc-containing alcohol dehydrogenase family. Class-III subfamily. As to quaternary structure, homodimer. Requires Zn(2+) as cofactor.

The protein resides in the cytoplasm. It catalyses the reaction S-(hydroxymethyl)glutathione + NADP(+) = S-formylglutathione + NADPH + H(+). It carries out the reaction S-(hydroxymethyl)glutathione + NAD(+) = S-formylglutathione + NADH + H(+). The catalysed reaction is a primary alcohol + NAD(+) = an aldehyde + NADH + H(+). The enzyme catalyses a secondary alcohol + NAD(+) = a ketone + NADH + H(+). It catalyses the reaction S-nitrosoglutathione + NADH + H(+) = S-(hydroxysulfenamide)glutathione + NAD(+). Has high formaldehyde dehydrogenase activity in the presence of glutathione and catalyzes the oxidation of normal alcohols in a reaction that is not GSH-dependent. In addition, hemithiolacetals other than those formed from GSH, including omega-thiol fatty acids, also are substrates. Also acts as a S-nitroso-glutathione reductase by catalyzing the NADH-dependent reduction of S-nitrosoglutathione. The sequence is that of S-(hydroxymethyl)glutathione dehydrogenase (frmA) from Escherichia coli O6:H1 (strain CFT073 / ATCC 700928 / UPEC).